A 241-amino-acid polypeptide reads, in one-letter code: Small ribosomal subunit protein uS3 (241 aa).

Positions 39–109 (IRQYITKNLS…QIRINVIEVQ (71 aa)) constitute a KH type-2 domain. The disordered stretch occupies residues 214 to 241 (EEIPMPVPSQTPRRQRRRQQFEDRSGEE). The span at 232 to 241 (QQFEDRSGEE) shows a compositional bias: basic and acidic residues.

This sequence belongs to the universal ribosomal protein uS3 family. Part of the 30S ribosomal subunit. Forms a tight complex with proteins S10 and S14.

Its function is as follows. Binds the lower part of the 30S subunit head. Binds mRNA in the 70S ribosome, positioning it for translation. The protein is Small ribosomal subunit protein uS3 of Rippkaea orientalis (strain PCC 8801 / RF-1) (Cyanothece sp. (strain PCC 8801)).